The sequence spans 601 residues: Ubiquitin carboxyl-terminal hydrolase MINDY-2 (601 aa).

The segment at 1–205 (MENSPDSPQP…LCKEEEEDPA (205 aa)) is disordered. Residues 24-34 (EGRRRGGREAE) are compositionally biased toward basic and acidic residues. The residue at position 62 (threonine 62) is a Phosphothreonine. Serine 82 carries the post-translational modification Phosphoserine. Low complexity-rich tracts occupy residues 127-141 (EEPS…SCSE), 148-169 (SPSL…SSEF), and 186-195 (GAAGPPRAAP). Cysteine 244 serves as the catalytic Nucleophile. Histidine 426 serves as the catalytic Proton acceptor. Residues 485 to 537 (GQQDQIDQDYLMALSLQQEQQSQEINWEQIPEGISDLELAKKLQEEEDRRASQ) form a ubiquitin-binding domain (UBD) region. Residues 534 to 601 (RASQYYQEQE…EKEKNSCVIL (68 aa)) form a disordered region. The segment covering 536–570 (SQYYQEQEQAQAVVTTTTPSTQAQQGQPAQASPSS) has biased composition (low complexity). The segment covering 577-601 (SERKRKEPREKDKEKEKEKNSCVIL) has biased composition (basic and acidic residues).

The protein belongs to the MINDY deubiquitinase family. FAM63 subfamily.

The enzyme catalyses Thiol-dependent hydrolysis of ester, thioester, amide, peptide and isopeptide bonds formed by the C-terminal Gly of ubiquitin (a 76-residue protein attached to proteins as an intracellular targeting signal).. Hydrolase that can remove 'Lys-48'-linked conjugated ubiquitin from proteins. Can also bind to polyubiquitin chains of different linkage types, including 'Lys-6', 'Lys-11', 'Lys-29', 'Lys-33' and 'Lys-63'. May play a regulatory role at the level of protein turnover. The protein is Ubiquitin carboxyl-terminal hydrolase MINDY-2 (Mindy2) of Mus musculus (Mouse).